Reading from the N-terminus, the 173-residue chain is uncharacterized protein (173 aa).

Disordered regions lie at residues 1 to 23 and 48 to 173; these read MGDL…GDVA and TGAA…APQR. Residues 49–60 are compositionally biased toward low complexity; it reads GAAPGSAQAGPP. The span at 70-83 shows a compositional bias: pro residues; it reads PRGPQAPPRLPPSL. Residues 123–136 show a composition bias toward low complexity; it reads PACAGSSAPGSPAA.

This is an uncharacterized protein from Homo sapiens (Human).